A 140-amino-acid polypeptide reads, in one-letter code: Biopolymer transport protein exbD1 (140 aa).

Residues 1-16 are Cytoplasmic-facing; sequence MAFSSGNSGGPMADIN. A helical transmembrane segment spans residues 17 to 37; that stretch reads VTPLVDVMLVLLIIFIITAPL. The Periplasmic segment spans residues 38–140; the sequence is MSHKVKVELP…GFVATKEKGQ (103 aa).

The protein belongs to the ExbD/TolR family. The accessory proteins ExbB and ExbD seem to form a complex with TonB.

The protein resides in the cell inner membrane. In terms of biological role, involved in the TonB-dependent energy-dependent transport of various receptor-bound substrates. This is Biopolymer transport protein exbD1 (exbD1) from Xanthomonas campestris pv. campestris (strain B100).